Reading from the N-terminus, the 296-residue chain is Maltose/maltodextrin transport system permease protein MalG (296 aa).

At 1 to 12 (MAMVQPKSQKWR) the chain is on the cytoplasmic side. Residues 13–35 (LLATHLLMFTFIAMILFPLLMVI) traverse the membrane as a helical segment. The Periplasmic segment spans residues 36 to 88 (TISLRPGNFATGSLIPENISWEHWKLALGYSVVSPDGRVTPPPFPVMLWLWNS). In terms of domain architecture, ABC transmembrane type-1 spans 85-281 (LWNSVKVAFI…LPITIVFLVA (197 aa)). Residues 89–111 (VKVAFITAVGIVTLSTTCAYAFA) traverse the membrane as a helical segment. Residues 112-123 (RMHFRGKSTLLK) are Cytoplasmic-facing. Residues 124–143 (GMLIFQMFPAVLSLVALYAL) traverse the membrane as a helical segment. Residues 144–152 (FDRLGEYVP) are Periplasmic-facing. Residues 153 to 175 (FIGLNTHGGVIFAYLGGIALHVW) traverse the membrane as a helical segment. Topologically, residues 176–205 (TIKGYFETIDGSLEEAAALDGATPWQAFRM) are cytoplasmic. Residues 206 to 228 (VLLPLSVPILAVVFILSFIGVIT) traverse the membrane as a helical segment. The Periplasmic portion of the chain corresponds to 229-257 (EVPVASLLLRDVNNYTLAVGMQQYLNPQN). Residues 258-280 (YLWGDFAAAAVLSALPITIVFLV) form a helical membrane-spanning segment. Topologically, residues 281-296 (AQRWLVSGLTAGGVKG) are cytoplasmic.

It belongs to the binding-protein-dependent transport system permease family. MalFG subfamily. In terms of assembly, the complex is composed of two ATP-binding proteins (MalK), two transmembrane proteins (MalG and MalF) and a solute-binding protein (MalE).

It localises to the cell inner membrane. Functionally, part of the ABC transporter complex MalEFGK involved in maltose/maltodextrin import. Probably responsible for the translocation of the substrate across the membrane. This Photorhabdus laumondii subsp. laumondii (strain DSM 15139 / CIP 105565 / TT01) (Photorhabdus luminescens subsp. laumondii) protein is Maltose/maltodextrin transport system permease protein MalG (malG).